The chain runs to 602 residues: Elongation factor 4 (602 aa).

Positions 7–190 (KHIRNFCIVA…AVVQKVPAPS (184 aa)) constitute a tr-type G domain. GTP is bound by residues 19 to 24 (DHGKST) and 137 to 140 (NKID).

This sequence belongs to the TRAFAC class translation factor GTPase superfamily. Classic translation factor GTPase family. LepA subfamily.

The protein resides in the cell membrane. The catalysed reaction is GTP + H2O = GDP + phosphate + H(+). Its function is as follows. Required for accurate and efficient protein synthesis under certain stress conditions. May act as a fidelity factor of the translation reaction, by catalyzing a one-codon backward translocation of tRNAs on improperly translocated ribosomes. Back-translocation proceeds from a post-translocation (POST) complex to a pre-translocation (PRE) complex, thus giving elongation factor G a second chance to translocate the tRNAs correctly. Binds to ribosomes in a GTP-dependent manner. The protein is Elongation factor 4 of Clostridium acetobutylicum (strain ATCC 824 / DSM 792 / JCM 1419 / IAM 19013 / LMG 5710 / NBRC 13948 / NRRL B-527 / VKM B-1787 / 2291 / W).